The sequence spans 2170 residues: Supervillin (2170 aa).

The interaction with MYLK stretch occupies residues 1–167 (MKRKERIARR…NSRHSRTESG (167 aa)). Disordered regions lie at residues 37 to 94 (EDTP…HSLE), 107 to 327 (RRRQ…QSES), 413 to 444 (PEPL…NKDL), 511 to 546 (DYTG…GAEA), and 567 to 643 (RASK…EDEE). Ser50 is modified (phosphoserine). 2 stretches are compositionally biased toward polar residues: residues 63–73 (PGSSLEKQTPS) and 81–90 (GIHSSGSMDT). A compositionally biased stretch (basic and acidic residues) spans 134-166 (SRKDPDVTERRGKSDKQEEQSKDANSRHSRTES). A compositionally biased stretch (polar residues) spans 167 to 195 (GPRTSLVASQDCTPLGSNMSDQEQLLNVE). Ser220, Ser227, and Ser241 each carry phosphoserine. The span at 230-241 (QIPSSPLQQPAS) shows a compositional bias: polar residues. Composition is skewed to basic and acidic residues over residues 261–272 (PTHEWFLQRDSE) and 286–297 (KVREKLVKEESA). Polar residues predominate over residues 298 to 313 (RSSPELTSESLTQRRQ). 2 positions are modified to phosphoserine: Ser299 and Ser300. A compositionally biased stretch (basic and acidic residues) spans 427-444 (EDDRLVRGHKDPSGNKDL). Basic and acidic residues-rich tracts occupy residues 570 to 582 (KKPE…ERSA) and 606 to 615 (ESRKTSERFR). 4 positions are modified to phosphoserine: Ser632, Ser666, Ser728, and Ser761. The tract at residues 743–771 (ASAHQKALARDQANEGRESAEPGEPDSST) is disordered. Basic and acidic residues predominate over residues 750–762 (LARDQANEGRESA). Tyr809 is subject to Phosphotyrosine. Position 811 is a phosphothreonine (Thr811). Phosphoserine occurs at positions 857, 877, and 881. The tract at residues 887–909 (AWRPLVEHSGSKGMPGESGKTES) is disordered. Phosphoserine occurs at positions 960, 1011, 1031, and 1077. Residues 1117-1137 (HTQEVEQSLKKKRVTESRESQ) form a disordered region. A compositionally biased stretch (basic and acidic residues) spans 1119-1137 (QEVEQSLKKKRVTESRESQ). Residue Arg1159 is modified to Omega-N-methylarginine. Phosphoserine occurs at positions 1181 and 1184. Thr1186 carries the phosphothreonine modification. 3 positions are modified to phosphoserine: Ser1190, Ser1278, and Ser1361. The tract at residues 1375-1643 (SNINLRSVNL…KFLDWTELKR (269 aa)) is interaction with NEB. 5 Gelsolin-like repeats span residues 1397–1496 (KKLM…LGGQ), 1516–1638 (IETN…FLDW), 1708–1818 (VSVD…FQGG), 1837–1938 (WRLY…LGRR), and 1971–2078 (ATEF…FPSW). The HP domain occupies 2107–2170 (KLCKTIYPLA…VNLKKSKGLF (64 aa)).

The protein belongs to the villin/gelsolin family. Associates with F-actin. Interacts with NEB. Interacts with MYH9. Interacts with MYLK. Interacts with TASOR. As to quaternary structure, interacts with TRIP6. Interacts with DYNLT1. Interacts with KIF14; at midbody during cytokinesis. Expressed in the heart, tongue and granular cells within the cerebellum.

The protein resides in the cell membrane. It is found in the cytoplasm. The protein localises to the cytoskeleton. Its subcellular location is the cell projection. It localises to the invadopodium. The protein resides in the podosome. It is found in the midbody. The protein localises to the cleavage furrow. Functionally, forms a high-affinity link between the actin cytoskeleton and the membrane. Is among the first costameric proteins to assemble during myogenesis and it contributes to myogenic membrane structure and differentiation. Appears to be involved in myosin II assembly. May modulate myosin II regulation through MLCK during cell spreading, an initial step in cell migration. May play a role in invadopodial function. May be involved in modulation of focal adhesions. Supervillin-mediated down-regulation of focal adhesions involves binding to TRIP6. Plays a role in cytokinesis through KIF14 interaction. The protein is Supervillin (Svil) of Mus musculus (Mouse).